A 1129-amino-acid polypeptide reads, in one-letter code: Ubiquitin carboxyl-terminal hydrolase 7 (1129 aa).

The tract at residues Met-1–Val-20 is disordered. Residues Glu-101–Val-222 form the MATH domain. Residues Val-241–Gln-548 form the USP domain. Cys-250 functions as the Nucleophile in the catalytic mechanism. His-490 acts as the Proton acceptor in catalysis. Ser-1117 bears the Phosphoserine mark.

It belongs to the peptidase C19 family.

Its subcellular location is the nucleus. The catalysed reaction is Thiol-dependent hydrolysis of ester, thioester, amide, peptide and isopeptide bonds formed by the C-terminal Gly of ubiquitin (a 76-residue protein attached to proteins as an intracellular targeting signal).. Its function is as follows. Hydrolase that deubiquitinates target proteins. In Drosophila melanogaster (Fruit fly), this protein is Ubiquitin carboxyl-terminal hydrolase 7 (Usp7).